The primary structure comprises 242 residues: ATP-dependent dethiobiotin synthetase BioD (242 aa).

12–17 is an ATP binding site; it reads EVGKTV. Thr-16 serves as a coordination point for Mg(2+). Residue Lys-37 is part of the active site. Ser-41 provides a ligand contact to substrate. Residues Asp-51 and 112–115 each bind ATP; that span reads EGAG. Positions 51 and 112 each coordinate Mg(2+).

It belongs to the dethiobiotin synthetase family. As to quaternary structure, homodimer. Mg(2+) serves as cofactor.

The protein localises to the cytoplasm. It carries out the reaction (7R,8S)-7,8-diammoniononanoate + CO2 + ATP = (4R,5S)-dethiobiotin + ADP + phosphate + 3 H(+). It participates in cofactor biosynthesis; biotin biosynthesis; biotin from 7,8-diaminononanoate: step 1/2. In terms of biological role, catalyzes a mechanistically unusual reaction, the ATP-dependent insertion of CO2 between the N7 and N8 nitrogen atoms of 7,8-diaminopelargonic acid (DAPA, also called 7,8-diammoniononanoate) to form a ureido ring. This Bacillus cereus (strain AH820) protein is ATP-dependent dethiobiotin synthetase BioD.